A 1335-amino-acid polypeptide reads, in one-letter code: Aldehyde oxidase 3 (1335 aa).

Residues 8-95 (DELIFFVNGK…GAAVTTVEGI (88 aa)) enclose the 2Fe-2S ferredoxin-type domain. Residues C47, C52, C55, and C77 each contribute to the [2Fe-2S] cluster site. Q116 contributes to the Mo-molybdopterin binding site. Residues C117, C120, C152, and C154 each coordinate [2Fe-2S] cluster. The FAD-binding PCMH-type domain occupies 236–421 (FRGERTTWIA…ISVFVPRSSK (186 aa)). Residue 264–271 (LVIGNTYL) participates in FAD binding. A Phosphoserine modification is found at S320. Residues S354, H358, D367, and L411 each contribute to the FAD site. Positions 802, 1043, and 1199 each coordinate Mo-molybdopterin. Catalysis depends on E1266, which acts as the Proton acceptor; for azaheterocycle hydroxylase activity.

This sequence belongs to the xanthine dehydrogenase family. Homodimer. The cofactor is [2Fe-2S] cluster. It depends on FAD as a cofactor. Mo-molybdopterin serves as cofactor. Highly expressed in liver (at protein level). In liver, the expression is greater in males than females.

It is found in the cytoplasm. It catalyses the reaction an aldehyde + O2 + H2O = a carboxylate + H2O2 + H(+). Inhibited by potassium cyanide, menadione, benzamidine, raloxifene and norharmane. Its function is as follows. Oxidase with broad substrate specificity, oxidizing aromatic azaheterocycles, such as N1-methylnicotinamide and phthalazine, as well as aldehydes, such as benzaldehyde, retinal and pyridoxal. Plays a key role in the metabolism of xenobiotics and drugs containing aromatic azaheterocyclic substituents. Is probably involved in the regulation of reactive oxygen species homeostasis. May be a prominent source of superoxide generation via the one-electron reduction of molecular oxygen. May also catalyze nitric oxide (NO) production via the reduction of nitrite to NO with NADH or aldehyde as electron donor. The sequence is that of Aldehyde oxidase 3 (Aox3) from Mus musculus (Mouse).